We begin with the raw amino-acid sequence, 311 residues long: tRNA dimethylallyltransferase (311 aa).

16–23 (GATASGKS) is an ATP binding site. Substrate is bound at residue 18 to 23 (TASGKS). Interaction with substrate tRNA stretches follow at residues 41–44 (DSRQ) and 165–169 (QRLIR).

It belongs to the IPP transferase family. Monomer. Mg(2+) serves as cofactor.

It carries out the reaction adenosine(37) in tRNA + dimethylallyl diphosphate = N(6)-dimethylallyladenosine(37) in tRNA + diphosphate. Functionally, catalyzes the transfer of a dimethylallyl group onto the adenine at position 37 in tRNAs that read codons beginning with uridine, leading to the formation of N6-(dimethylallyl)adenosine (i(6)A). The polypeptide is tRNA dimethylallyltransferase (Chlorobium chlorochromatii (strain CaD3)).